Consider the following 364-residue polypeptide: Probable dual-specificity RNA methyltransferase RlmN (364 aa).

The active-site Proton acceptor is glutamate 107. The Radical SAM core domain maps to 113–346 (HEYGNSVCVT…ATIRREQGAD (234 aa)). Residues cysteine 120 and cysteine 351 are joined by a disulfide bond. The [4Fe-4S] cluster site is built by cysteine 127, cysteine 131, and cysteine 134. S-adenosyl-L-methionine is bound by residues 177–178 (GE), serine 209, 232–234 (SLH), and asparagine 308. The S-methylcysteine intermediate role is filled by cysteine 351.

It belongs to the radical SAM superfamily. RlmN family. Requires [4Fe-4S] cluster as cofactor.

The protein resides in the cytoplasm. It carries out the reaction adenosine(2503) in 23S rRNA + 2 reduced [2Fe-2S]-[ferredoxin] + 2 S-adenosyl-L-methionine = 2-methyladenosine(2503) in 23S rRNA + 5'-deoxyadenosine + L-methionine + 2 oxidized [2Fe-2S]-[ferredoxin] + S-adenosyl-L-homocysteine. The enzyme catalyses adenosine(37) in tRNA + 2 reduced [2Fe-2S]-[ferredoxin] + 2 S-adenosyl-L-methionine = 2-methyladenosine(37) in tRNA + 5'-deoxyadenosine + L-methionine + 2 oxidized [2Fe-2S]-[ferredoxin] + S-adenosyl-L-homocysteine. In terms of biological role, specifically methylates position 2 of adenine 2503 in 23S rRNA and position 2 of adenine 37 in tRNAs. Confers resistance to some classes of antibiotics. In Staphylococcus saprophyticus subsp. saprophyticus (strain ATCC 15305 / DSM 20229 / NCIMB 8711 / NCTC 7292 / S-41), this protein is Probable dual-specificity RNA methyltransferase RlmN.